We begin with the raw amino-acid sequence, 314 residues long: Porphobilinogen deaminase (314 aa).

The residue at position 242 (Cys-242) is an S-(dipyrrolylmethanemethyl)cysteine.

This sequence belongs to the HMBS family. In terms of assembly, monomer. Dipyrromethane is required as a cofactor.

It carries out the reaction 4 porphobilinogen + H2O = hydroxymethylbilane + 4 NH4(+). Its pathway is porphyrin-containing compound metabolism; protoporphyrin-IX biosynthesis; coproporphyrinogen-III from 5-aminolevulinate: step 2/4. Functionally, tetrapolymerization of the monopyrrole PBG into the hydroxymethylbilane pre-uroporphyrinogen in several discrete steps. This Buchnera aphidicola subsp. Acyrthosiphon pisum (strain APS) (Acyrthosiphon pisum symbiotic bacterium) protein is Porphobilinogen deaminase (hemC).